A 279-amino-acid chain; its full sequence is Large ribosomal subunit protein uL2 (279 aa).

The tract at residues 224–279 (AMNPIDHPHGGGEGRTSGGRHPVTPWGKGTKGNRTRKSKASDKLIVRSRHAKKKGR) is disordered. Residues 269 to 279 (VRSRHAKKKGR) show a composition bias toward basic residues.

Belongs to the universal ribosomal protein uL2 family. In terms of assembly, part of the 50S ribosomal subunit. Forms a bridge to the 30S subunit in the 70S ribosome.

Functionally, one of the primary rRNA binding proteins. Required for association of the 30S and 50S subunits to form the 70S ribosome, for tRNA binding and peptide bond formation. It has been suggested to have peptidyltransferase activity; this is somewhat controversial. Makes several contacts with the 16S rRNA in the 70S ribosome. The chain is Large ribosomal subunit protein uL2 from Cereibacter sphaeroides (strain ATCC 17025 / ATH 2.4.3) (Rhodobacter sphaeroides).